A 330-amino-acid chain; its full sequence is Methionyl-tRNA formyltransferase (330 aa).

S116 to P119 is a binding site for (6S)-5,6,7,8-tetrahydrofolate.

The protein belongs to the Fmt family.

The catalysed reaction is L-methionyl-tRNA(fMet) + (6R)-10-formyltetrahydrofolate = N-formyl-L-methionyl-tRNA(fMet) + (6S)-5,6,7,8-tetrahydrofolate + H(+). Its function is as follows. Attaches a formyl group to the free amino group of methionyl-tRNA(fMet). The formyl group appears to play a dual role in the initiator identity of N-formylmethionyl-tRNA by promoting its recognition by IF2 and preventing the misappropriation of this tRNA by the elongation apparatus. The chain is Methionyl-tRNA formyltransferase from Nitratidesulfovibrio vulgaris (strain ATCC 29579 / DSM 644 / CCUG 34227 / NCIMB 8303 / VKM B-1760 / Hildenborough) (Desulfovibrio vulgaris).